Reading from the N-terminus, the 40-residue chain is Small polypeptide DEVIL 3 (40 aa).

Residues 9-40 (PCNKKLGGYLKEQKGRLYIIRRCVVMLICWHD) are required for DVL/RTFL small polypeptide activity. The chain crosses the membrane as a helical span at residues 12 to 28 (KKLGGYLKEQKGRLYII).

This sequence belongs to the DVL/RTFL small polypeptides family. As to expression, mostly expressed in flowers and stems, and, to a lower extent, in roots and leaves.

The protein localises to the cell membrane. Its function is as follows. Small polypeptide acting as a regulatory molecule which coordinates cellular responses required for differentiation, growth and development, including leaves shape, pedicule elongation, inflorescence organization and fruit maturation, probably by restricting polar cell proliferation in lateral organs and coordinating socket cell recruitment and differentiation at trichome sites. In Arabidopsis thaliana (Mouse-ear cress), this protein is Small polypeptide DEVIL 3.